A 160-amino-acid polypeptide reads, in one-letter code: Cyclic pyranopterin monophosphate synthase (160 aa).

Substrate is bound by residues 74–76 (LSH) and 112–113 (ME). Residue Asp-127 is part of the active site.

The protein belongs to the MoaC family. As to quaternary structure, homohexamer; trimer of dimers.

The catalysed reaction is (8S)-3',8-cyclo-7,8-dihydroguanosine 5'-triphosphate = cyclic pyranopterin phosphate + diphosphate. Its pathway is cofactor biosynthesis; molybdopterin biosynthesis. Its function is as follows. Catalyzes the conversion of (8S)-3',8-cyclo-7,8-dihydroguanosine 5'-triphosphate to cyclic pyranopterin monophosphate (cPMP). This Geotalea uraniireducens (strain Rf4) (Geobacter uraniireducens) protein is Cyclic pyranopterin monophosphate synthase.